Consider the following 502-residue polypeptide: ATP synthase subunit alpha (502 aa).

Residue 169–176 (GDRQTGKT) participates in ATP binding.

It belongs to the ATPase alpha/beta chains family. F-type ATPases have 2 components, CF(1) - the catalytic core - and CF(0) - the membrane proton channel. CF(1) has five subunits: alpha(3), beta(3), gamma(1), delta(1), epsilon(1). CF(0) has three main subunits: a(1), b(2) and c(9-12). The alpha and beta chains form an alternating ring which encloses part of the gamma chain. CF(1) is attached to CF(0) by a central stalk formed by the gamma and epsilon chains, while a peripheral stalk is formed by the delta and b chains.

It is found in the cell membrane. It catalyses the reaction ATP + H2O + 4 H(+)(in) = ADP + phosphate + 5 H(+)(out). Produces ATP from ADP in the presence of a proton gradient across the membrane. The alpha chain is a regulatory subunit. This chain is ATP synthase subunit alpha, found in Streptococcus pyogenes serotype M12 (strain MGAS9429).